Here is a 394-residue protein sequence, read N- to C-terminus: Dual-specificity RNA methyltransferase RlmN (394 aa).

Catalysis depends on glutamate 92, which acts as the Proton acceptor. Positions glutamate 98–aspartate 341 constitute a Radical SAM core domain. Cysteine 105 and cysteine 346 form a disulfide bridge. [4Fe-4S] cluster is bound by residues cysteine 112, cysteine 116, and cysteine 119. Residues glycine 166–glutamate 167, serine 198, serine 220–histidine 222, and asparagine 303 each bind S-adenosyl-L-methionine. Catalysis depends on cysteine 346, which acts as the S-methylcysteine intermediate. Residues aspartate 374–arginine 394 are disordered.

The protein belongs to the radical SAM superfamily. RlmN family. It depends on [4Fe-4S] cluster as a cofactor.

It localises to the cytoplasm. It carries out the reaction adenosine(2503) in 23S rRNA + 2 reduced [2Fe-2S]-[ferredoxin] + 2 S-adenosyl-L-methionine = 2-methyladenosine(2503) in 23S rRNA + 5'-deoxyadenosine + L-methionine + 2 oxidized [2Fe-2S]-[ferredoxin] + S-adenosyl-L-homocysteine. The enzyme catalyses adenosine(37) in tRNA + 2 reduced [2Fe-2S]-[ferredoxin] + 2 S-adenosyl-L-methionine = 2-methyladenosine(37) in tRNA + 5'-deoxyadenosine + L-methionine + 2 oxidized [2Fe-2S]-[ferredoxin] + S-adenosyl-L-homocysteine. Specifically methylates position 2 of adenine 2503 in 23S rRNA and position 2 of adenine 37 in tRNAs. m2A2503 modification seems to play a crucial role in the proofreading step occurring at the peptidyl transferase center and thus would serve to optimize ribosomal fidelity. In Methylibium petroleiphilum (strain ATCC BAA-1232 / LMG 22953 / PM1), this protein is Dual-specificity RNA methyltransferase RlmN.